Reading from the N-terminus, the 297-residue chain is 4-hydroxy-tetrahydrodipicolinate synthase (297 aa).

T49 provides a ligand contact to pyruvate. Residue Y137 is the Proton donor/acceptor of the active site. Catalysis depends on K166, which acts as the Schiff-base intermediate with substrate. I208 contributes to the pyruvate binding site.

This sequence belongs to the DapA family. Homotetramer; dimer of dimers.

Its subcellular location is the cytoplasm. It catalyses the reaction L-aspartate 4-semialdehyde + pyruvate = (2S,4S)-4-hydroxy-2,3,4,5-tetrahydrodipicolinate + H2O + H(+). Its pathway is amino-acid biosynthesis; L-lysine biosynthesis via DAP pathway; (S)-tetrahydrodipicolinate from L-aspartate: step 3/4. Its function is as follows. Catalyzes the condensation of (S)-aspartate-beta-semialdehyde [(S)-ASA] and pyruvate to 4-hydroxy-tetrahydrodipicolinate (HTPA). This Phocaeicola vulgatus (strain ATCC 8482 / DSM 1447 / JCM 5826 / CCUG 4940 / NBRC 14291 / NCTC 11154) (Bacteroides vulgatus) protein is 4-hydroxy-tetrahydrodipicolinate synthase.